A 420-amino-acid chain; its full sequence is uncharacterized protein (420 aa).

Residues 79–420 (GKGIDNEAAM…AVNTIRGAES (342 aa)) enclose the YcaO domain.

This is an uncharacterized protein from Rhizobium leguminosarum bv. trifolii.